We begin with the raw amino-acid sequence, 142 residues long: MQPRGLLLLLALLLLAAAAEAAKAKKEKMKKEGSECQDWHWGPCIPNSKDCGLGYREGSCGDESRKLKCKIPCNWKKKFGADCKYKFESWGGCSAKTGVKTRSGILKKALYNAECEEVVYVSKPCTAKMKAKAKAKKGKGKD.

Residues 1–21 (MQPRGLLLLLALLLLAAAAEA) form the signal peptide. Cystine bridges form between C36/C60, C44/C69, C51/C73, C83/C115, and C93/C125.

It belongs to the pleiotrophin family.

The protein localises to the cell surface. Its subcellular location is the secreted. The protein resides in the extracellular space. It is found in the extracellular matrix. It localises to the basement membrane. Its function is as follows. Has mitogenic activity, and neurite extension activity for PC12 cells. The protein is Midkine (RIHB) of Gallus gallus (Chicken).